Reading from the N-terminus, the 788-residue chain is MTDKSTFLSVLFGGGSVYQDLDGDGEVEDAEILRRVEEEHAQTSDNSNSDNDSGNDSDVPTSLMVEGVQDPKPGSKRRQPHRMATLSNLQSSAGPGARSVSFAQGTKTQTPIRLTKPTGVANGGLPRHKQDLGASIRTMVDPKELALWKWANVQNLDNFFAEAYMYYTGKGLVSIILSRVLNMSTIMFVVVFSTYLGSCIDYSKIKGSRTLDEVHVKQCYAKLGSFHVFVLWTFFVLWFMKLFQYVKDIRRLVDMKSFYQELLEIDENELQTISWPQVAKRMATLSEANAATQVGNSTKQRIEPHDIANRVMRKENYLVAMFHKRVLNMTVPLPQPLQRIFGRPQLLSRALEWNLSLCILDYVFNPAGQVRPMFLKSTHKQILSTGLRRRFVFAAIMNVVFAPFIILYLALLYFFRYFNEYHKNPASIGTRRYNPLAEWKLREYNELPHQFERRLTLSYIPASKYLDQFPKEKTALVSKFVSFIAGSFAAVLGIASLIDPELFLMFEISANRTVLFYIGVFGSILAVSRSLIPEETLVFDPEISLRYVAEFTHYLPPEWEGKLHTEQVKNEFSLMYEMRLIILLKELASIFLAPFILYYSLTQSCDDIVDFIRDHSVHVDGLGYVCTFAMFDFKQKSPDHQPDEDQKMLKSYLYFMDHYGDKPTNVSQTQQNVPMYSSVRLKNDGLDLNNSIMQKFQKHNGHHALSGLTQRDVGLSPAAPTATTATSGTATGAAPRRDLINFDVDESFIDQTTSNRDMDNDEQPKDKERVVDMLNQFYKKTDNMNLGA.

The Cytoplasmic portion of the chain corresponds to 1–171; the sequence is MTDKSTFLSV…EAYMYYTGKG (171 aa). Residues 32 to 42 are compositionally biased toward basic and acidic residues; the sequence is ILRRVEEEHAQ. A disordered region spans residues 32–127; the sequence is ILRRVEEEHA…TGVANGGLPR (96 aa). Positions 44–58 are enriched in low complexity; sequence SDNSNSDNDSGNDSD. Residues 101-112 are compositionally biased toward polar residues; that stretch reads SFAQGTKTQTPI. The chain crosses the membrane as a helical span at residues 172–192; that stretch reads LVSIILSRVLNMSTIMFVVVF. The Lumenal portion of the chain corresponds to 193-222; the sequence is STYLGSCIDYSKIKGSRTLDEVHVKQCYAK. The chain crosses the membrane as a helical span at residues 223 to 243; it reads LGSFHVFVLWTFFVLWFMKLF. At 244 to 390 the chain is on the cytoplasmic side; the sequence is QYVKDIRRLV…QILSTGLRRR (147 aa). F391 is an intramembrane region. At 392–479 the chain is on the cytoplasmic side; sequence VFAAIMNVVF…PKEKTALVSK (88 aa). A helical membrane pass occupies residues 480 to 500; sequence FVSFIAGSFAAVLGIASLIDP. Topologically, residues 501-512 are lumenal; that stretch reads ELFLMFEISANR. The chain crosses the membrane as a helical span at residues 513-533; that stretch reads TVLFYIGVFGSILAVSRSLIP. At 534–579 the chain is on the cytoplasmic side; it reads EETLVFDPEISLRYVAEFTHYLPPEWEGKLHTEQVKNEFSLMYEMR. An intramembrane segment occupies 580-600; sequence LIILLKELASIFLAPFILYYS. Residues 601–788 are Cytoplasmic-facing; that stretch reads LTQSCDDIVD…KKTDNMNLGA (188 aa). The disordered stretch occupies residues 715 to 736; it reads LSPAAPTATTATSGTATGAAPR. Residues 716-734 are compositionally biased toward low complexity; that stretch reads SPAAPTATTATSGTATGAA.

This sequence belongs to the ATG9 family. Homotrimer; forms a homotrimer with a central pore that forms a path between the two membrane leaflets. In terms of processing, phosphorylated by ATG1. ATG1 phosphorylation is required for preautophagosome elongation.

It localises to the preautophagosomal structure membrane. The protein resides in the cytoplasmic vesicle membrane. The protein localises to the golgi apparatus membrane. It is found in the endoplasmic reticulum membrane. The catalysed reaction is a 1,2-diacyl-sn-glycero-3-phosphocholine(in) = a 1,2-diacyl-sn-glycero-3-phosphocholine(out). The enzyme catalyses a 1,2-diacyl-sn-glycero-3-phospho-L-serine(in) = a 1,2-diacyl-sn-glycero-3-phospho-L-serine(out). It catalyses the reaction a 1,2-diacyl-sn-glycero-3-phosphoethanolamine(in) = a 1,2-diacyl-sn-glycero-3-phosphoethanolamine(out). It carries out the reaction a 1,2-diacyl-sn-glycero-3-phospho-(1D-myo-inositol-3-phosphate)(in) = a 1,2-diacyl-sn-glycero-3-phospho-(1D-myo-inositol-3-phosphate)(out). Its function is as follows. Phospholipid scramblase involved in autophagy and cytoplasm to vacuole transport (Cvt) vesicle formation. Cycles between the preautophagosomal structure/phagophore assembly site (PAS) and the cytoplasmic vesicle pool and supplies membrane for the growing autophagosome. Lipid scramblase activity plays a key role in preautophagosomal structure/phagophore assembly by distributing the phospholipids that arrive through ATG2 from the cytoplasmic to the luminal leaflet of the bilayer, thereby driving autophagosomal membrane expansion. Required for mitophagy. Also involved in endoplasmic reticulum-specific autophagic process and is essential for the survival of cells subjected to severe ER stress. Different machineries are required for anterograde trafficking to the PAS during either the Cvt pathway or bulk autophagy and for retrograde trafficking. The chain is Autophagy-related protein 9 from Yarrowia lipolytica (strain CLIB 122 / E 150) (Yeast).